The sequence spans 374 residues: Putative 2,3-diketo-5-methylthiopentyl-1-phosphate enolase (374 aa).

Substrate-binding positions include lysine 138, 164 to 167 (QDDE), histidine 255, glycine 327, and 349 to 350 (GG). A Mg(2+)-binding site is contributed by aspartate 166.

The protein belongs to the RuBisCO large chain family. Type IV subfamily. Homodimer. Mg(2+) serves as cofactor.

The enzyme catalyses 5-methylsulfanyl-2,3-dioxopentyl phosphate = 2-hydroxy-5-methylsulfanyl-3-oxopent-1-enyl phosphate. The protein operates within amino-acid biosynthesis; L-methionine biosynthesis via salvage pathway; L-methionine from S-methyl-5-thio-alpha-D-ribose 1-phosphate: step 3/6. In terms of biological role, catalyzes the enolization of 2,3-diketo-5-methylthiopentyl-1-phosphate (DK-MTP-1-P) into 2-hydroxy-3-keto-5-methylthiopentenyl-1-phosphate (HK-MTPenyl-1-P). The protein is Putative 2,3-diketo-5-methylthiopentyl-1-phosphate enolase (mtnW) of Shouchella clausii (strain KSM-K16) (Alkalihalobacillus clausii).